The sequence spans 1522 residues: ATP-binding cassette sub-family C member 3 (1522 aa).

The Extracellular segment spans residues 1–32 (MDRLCGSGELGSKFWDSNLTVYTNTPDLTPCF). N-linked (GlcNAc...) asparagine glycosylation is present at Asn-18. The chain crosses the membrane as a helical span at residues 33-53 (QNSLLAWVPCIYLWAALPCYL). Over 54–73 (FYLRHHRLGYIVLSCLSRLK) the chain is Cytoplasmic. Residues 74–94 (TALGVLLWCISWVDLFYSFHG) traverse the membrane as a helical segment. The Extracellular portion of the chain corresponds to 95–99 (LVHGS). The helical transmembrane segment at 100–120 (SPAPVFFITPLLVGITMLLAT) threads the bilayer. Topologically, residues 121 to 132 (LLIQYERLRGVR) are cytoplasmic. A helical membrane pass occupies residues 133–153 (SSGVLIIFWLLCVICAIIPFR). Residues 154 to 171 (SKILLALAEGKILDPFRF) are Extracellular-facing. A helical transmembrane segment spans residues 172–192 (TTFYIYFALVLCAFILSCFQE). The Cytoplasmic portion of the chain corresponds to 193 to 301 (KPPLFSPENL…KTKKPSFLRA (109 aa)). The chain crosses the membrane as a helical span at residues 302 to 322 (LVRTFTSSLLMGACFKLIQDL). In terms of domain architecture, ABC transmembrane type-1 1 spans 310-592 (LLMGACFKLI…LPQLISGMTQ (283 aa)). Residues 323-347 (SPSSTHSCSASSSGLFRPHGPYWWG) are Extracellular-facing. A helical transmembrane segment spans residues 348–368 (FLLAGLMFVSSTMQTLILHQH). Over 369 to 424 (YHCIFVMALRIRTAIIGVIYRKALTITNSVKREYTVGEMVNLMSVDAQRFMDVSPF) the chain is Cytoplasmic. A helical transmembrane segment spans residues 425–445 (INLLWSAPLQVILAIYFLWQI). Residues 446 to 448 (LGP) lie on the Extracellular side of the membrane. Residues 449–469 (SALAGVAVIVLLIPLNGAVSM) traverse the membrane as a helical segment. Residues 470 to 531 (KMKTYQVQQM…LLRKGAYLQA (62 aa)) lie on the Cytoplasmic side of the membrane. The chain crosses the membrane as a helical span at residues 532–552 (ISTFIWVCTPFMVTLITLGVY). The Extracellular portion of the chain corresponds to 553-574 (VCVDKNNVLDAEKAFVSLSLFN). A helical transmembrane segment spans residues 575–595 (ILKIPLNLLPQLISGMTQTSV). At 596-958 (SLKRIQDFLN…VKLSVYWDYA (363 aa)) the chain is on the cytoplasmic side. The ABC transporter 1 domain maps to 625–849 (ITIHNGTFSW…DGSFANFLRN (225 aa)). 659–666 (GPVGCGKS) is an ATP binding site. 2 positions are modified to phosphoserine: Ser-902 and Ser-905. Residues 959 to 979 (KSVGLCTTLFICLLYAGQNAV) traverse the membrane as a helical segment. An ABC transmembrane type-1 2 domain is found at 966–1247 (TLFICLLYAG…MIRTLSDLES (282 aa)). Over 980–1016 (AIGANVWLSAWTNDVEEHGQQNNTSVRLGVYATLGIL) the chain is Extracellular. Residues Asn-1001 and Asn-1002 are each glycosylated (N-linked (GlcNAc...) asparagine). Residues 1017–1037 (QGLLVMLSAFTMVVGAIQAAR) form a helical membrane-spanning segment. Residues 1038–1080 (LLHTALLHNQIRAPQSFFDTTPSGRILNRFSKDIYVIHEVLAP) are Cytoplasmic-facing. Residues 1081 to 1101 (TILMLFNSFYTSISTIVVIVA) traverse the membrane as a helical segment. Residue Ser-1102 is a topological domain, extracellular. Residues 1103–1123 (TPLFCVVVLPLAVFYGFVQRF) form a helical membrane-spanning segment. Topologically, residues 1124–1194 (YVATSRQLKR…ASNRWLGVHV (71 aa)) are cytoplasmic. The helical transmembrane segment at 1195 to 1215 (EFVGNCVVLFSALFAVIGRNS) threads the bilayer. At 1216-1217 (LN) the chain is on the extracellular side. The helical transmembrane segment at 1218–1238 (PGLVGLSVSYALQVTLSLNWM) threads the bilayer. Residues 1239 to 1522 (IRTLSDLESN…YGMAKDAGLA (284 aa)) lie on the Cytoplasmic side of the membrane. The ABC transporter 2 domain maps to 1286-1518 (FRNYSVRYRP…GGIFYGMAKD (233 aa)). 1318–1325 (GRTGAGKS) contributes to the ATP binding site.

It belongs to the ABC transporter superfamily. ABCC family. Conjugate transporter (TC 3.A.1.208) subfamily. Expressed in lung, ileum, colon and liver. Higher in liver of Eisai hyperbilirubinemic rats.

Its subcellular location is the basolateral cell membrane. It localises to the basal cell membrane. It catalyses the reaction an S-substituted glutathione(in) + ATP + H2O = an S-substituted glutathione(out) + ADP + phosphate + H(+). The catalysed reaction is ATP + H2O + xenobioticSide 1 = ADP + phosphate + xenobioticSide 2.. The enzyme catalyses taurocholate(in) + ATP + H2O = taurocholate(out) + ADP + phosphate + H(+). It carries out the reaction glycocholate(in) + ATP + H2O = glycocholate(out) + ADP + phosphate + H(+). It catalyses the reaction taurolithocholate 3-sulfate(in) + ATP + H2O = taurolithocholate 3-sulfate(out) + ADP + phosphate + H(+). The catalysed reaction is 17beta-estradiol 17-O-(beta-D-glucuronate)(in) + ATP + H2O = 17beta-estradiol 17-O-(beta-D-glucuronate)(out) + ADP + phosphate + H(+). The enzyme catalyses dehydroepiandrosterone 3-sulfate(in) + ATP + H2O = dehydroepiandrosterone 3-sulfate(out) + ADP + phosphate + H(+). It carries out the reaction leukotriene C4(in) + ATP + H2O = leukotriene C4(out) + ADP + phosphate + H(+). It catalyses the reaction (4Z,15Z)-bilirubin IXalpha C8-beta-D-glucuronoside(in) + ATP + H2O = (4Z,15Z)-bilirubin IXalpha C8-beta-D-glucuronoside(out) + ADP + phosphate + H(+). The catalysed reaction is (4Z,15Z)-bilirubin IXalpha C8,C12-beta-D-bisglucuronoside(in) + ATP + H2O = (4Z,15Z)-bilirubin IXalpha C8,C12-beta-D-bisglucuronoside(out) + ADP + phosphate + H(+). The enzyme catalyses taurochenodeoxycholate 3-sulfate(in) + ATP + H2O = taurochenodeoxycholate 3-sulfate(out) + ADP + phosphate + H(+). Its function is as follows. ATP-dependent transporter of the ATP-binding cassette (ABC) family that binds and hydrolyzes ATP to enable active transport of various substrates including many drugs, toxicants and endogenous compound across cell membranes. Transports glucuronide conjugates such as bilirubin diglucuronide, estradiol-17-beta-o-glucuronide and GSH conjugates such as leukotriene C4 (LTC4). Transports also various bile salts (taurocholate, glycocholate, taurochenodeoxycholate-3-sulfate, taurolithocholate- 3-sulfate). Does not contribute substantially to bile salt physiology but provides an alternative route for the export of bile acids and glucuronides from cholestatic hepatocytes. May contribute to regulate the transport of organic compounds in testes across the blood-testis-barrier. The chain is ATP-binding cassette sub-family C member 3 (Abcc3) from Rattus norvegicus (Rat).